The primary structure comprises 518 residues: Bifunctional purine biosynthesis protein PurH (518 aa).

The MGS-like domain occupies 1 to 146 (MARIALISVS…KNHESVSILT (146 aa)).

This sequence belongs to the PurH family.

The catalysed reaction is (6R)-10-formyltetrahydrofolate + 5-amino-1-(5-phospho-beta-D-ribosyl)imidazole-4-carboxamide = 5-formamido-1-(5-phospho-D-ribosyl)imidazole-4-carboxamide + (6S)-5,6,7,8-tetrahydrofolate. The enzyme catalyses IMP + H2O = 5-formamido-1-(5-phospho-D-ribosyl)imidazole-4-carboxamide. Its pathway is purine metabolism; IMP biosynthesis via de novo pathway; 5-formamido-1-(5-phospho-D-ribosyl)imidazole-4-carboxamide from 5-amino-1-(5-phospho-D-ribosyl)imidazole-4-carboxamide (10-formyl THF route): step 1/1. The protein operates within purine metabolism; IMP biosynthesis via de novo pathway; IMP from 5-formamido-1-(5-phospho-D-ribosyl)imidazole-4-carboxamide: step 1/1. The sequence is that of Bifunctional purine biosynthesis protein PurH from Prochlorococcus marinus (strain MIT 9211).